The chain runs to 398 residues: Acetate kinase (398 aa).

N8 lines the Mg(2+) pocket. K15 contributes to the ATP binding site. R92 provides a ligand contact to substrate. Catalysis depends on D149, which acts as the Proton donor/acceptor. ATP contacts are provided by residues 209 to 213, 283 to 285, and 331 to 335; these read HLGNG, DFR, and GVGEN. E385 serves as a coordination point for Mg(2+).

The protein belongs to the acetokinase family. In terms of assembly, homodimer. Mg(2+) serves as cofactor. The cofactor is Mn(2+).

It localises to the cytoplasm. It carries out the reaction acetate + ATP = acetyl phosphate + ADP. It participates in metabolic intermediate biosynthesis; acetyl-CoA biosynthesis; acetyl-CoA from acetate: step 1/2. Catalyzes the formation of acetyl phosphate from acetate and ATP. Can also catalyze the reverse reaction. The sequence is that of Acetate kinase from Corynebacterium efficiens (strain DSM 44549 / YS-314 / AJ 12310 / JCM 11189 / NBRC 100395).